Reading from the N-terminus, the 324-residue chain is MHLQQLVVSWFSLVWLASPIVAIWELEKNVYVVELDWYPNAPGEMVVLTCNTPEEDGITWTSDQSSEVLGTGKTLTIHVKEFGDAGQYTCRKGGAVLSQSLLLLHKKEDGIWSTDILKDQKEPKNKSFLKCEAKNYSGRFTCWWLTAISTDLKFSVKSSRGSTDPRGVTCGTATLSEDLGEYKKYRVECQEGSACPAAEESLPIEVVLEAVHKLKYENYTSSFFIRDIIKPDPPKNLQLNPLKNSRHVEISWEYPDTWSTPHSYFSLMFGVQVQGKNKREKKDKLFTDQISAKVTCHKDANIRVQARDRYYSSSWSEWASVSCN.

The signal sequence occupies residues 1-22 (MHLQQLVVSWFSLVWLASPIVA). Residues 23 to 106 (IWELEKNVYV…LSQSLLLLHK (84 aa)) form the Ig-like C2-type domain. An intrachain disulfide couples cysteine 50 to cysteine 90. N-linked (GlcNAc...) asparagine glycans are attached at residues asparagine 125, asparagine 135, and asparagine 218. Residues 233–324 (PPKNLQLNPL…WSEWASVSCN (92 aa)) form the Fibronectin type-III domain.

Belongs to the IL-12B family. In terms of assembly, heterodimer with IL12A; disulfide-linked. The heterodimer is known as interleukin IL-12. Heterodimer with IL23A; disulfide-linked. The heterodimer is known as interleukin IL-23. Also secreted as a monomer. Interacts with NBR1; this interaction promotes IL-12 secretion.

Its subcellular location is the secreted. Cytokine that can act as a growth factor for activated T and NK cells, enhance the lytic activity of NK/lymphokine-activated killer cells, and stimulate the production of IFN-gamma by resting PBMC. Functionally, associates with IL23A to form the IL-23 interleukin, a heterodimeric cytokine which functions in innate and adaptive immunity. IL-23 may constitute with IL-17 an acute response to infection in peripheral tissues. IL-23 binds to a heterodimeric receptor complex composed of IL12RB1 and IL23R, activates the Jak-Stat signaling cascade, stimulates memory rather than naive T-cells and promotes production of pro-inflammatory cytokines. IL-23 induces autoimmune inflammation and thus may be responsible for autoimmune inflammatory diseases and may be important for tumorigenesis. The chain is Interleukin-12 subunit beta (IL12B) from Sus scrofa (Pig).